Here is a 376-residue protein sequence, read N- to C-terminus: MQPRDLSAHEPYVPGRGTKEVARELEVDPDSLIKLSSNENPHGPSPAAVDAIADTAETVNTYPKSSHTDLTARIADYWGLSPEQIWLSPGADGAIDYLSRAFLTPGDTMLISDPGFSYYPMSARYHHGSIRTYPVSKEQDFQQRASDILTQYDDERLLYVTTPHNPSGSELPIPEITALAEGVDDQTLIVIDEAYGEYSNNPSAIKLIQEYDNIAVLRTFSKAYGLAGLRIGYAAVPESWADAYARINTPFAANKTACQAALAAIEDQSHVEHSIETARWAREHYREELDARTWPSGGNFVLCEVGDGNAVAEAAKQEGVIIRDTTSFGLPECVRISCGTREQTKRAVDIISAVIEDVETATTTTESGVETEVGRP.

The tract at residues 1–21 (MQPRDLSAHEPYVPGRGTKEV) is disordered. At Lys222 the chain carries N6-(pyridoxal phosphate)lysine.

It belongs to the class-II pyridoxal-phosphate-dependent aminotransferase family. Histidinol-phosphate aminotransferase subfamily. Pyridoxal 5'-phosphate serves as cofactor.

The enzyme catalyses L-histidinol phosphate + 2-oxoglutarate = 3-(imidazol-4-yl)-2-oxopropyl phosphate + L-glutamate. It functions in the pathway amino-acid biosynthesis; L-histidine biosynthesis; L-histidine from 5-phospho-alpha-D-ribose 1-diphosphate: step 7/9. The sequence is that of Histidinol-phosphate aminotransferase from Haloquadratum walsbyi (strain DSM 16790 / HBSQ001).